The sequence spans 872 residues: Protein translocase subunit SecA (872 aa).

Residues Gln87, 105-109, and Asp500 contribute to the ATP site; that span reads GEGKT. Zn(2+) is bound by residues Cys855, Cys857, Cys866, and His867.

This sequence belongs to the SecA family. Monomer and homodimer. Part of the essential Sec protein translocation apparatus which comprises SecA, SecYEG and auxiliary proteins SecDF-YajC and YidC. The cofactor is Zn(2+).

It is found in the cell inner membrane. Its subcellular location is the cytoplasm. The catalysed reaction is ATP + H2O + cellular proteinSide 1 = ADP + phosphate + cellular proteinSide 2.. Functionally, part of the Sec protein translocase complex. Interacts with the SecYEG preprotein conducting channel. Has a central role in coupling the hydrolysis of ATP to the transfer of proteins into and across the cell membrane, serving both as a receptor for the preprotein-SecB complex and as an ATP-driven molecular motor driving the stepwise translocation of polypeptide chains across the membrane. This Anaplasma marginale (strain St. Maries) protein is Protein translocase subunit SecA.